An 811-amino-acid chain; its full sequence is E3 ubiquitin-protein ligase RNF10 (811 aa).

The span at 1–10 (MPLSSPNAAA) shows a compositional bias: polar residues. The disordered stretch occupies residues 1–119 (MPLSSPNAAA…SFNGGRRDEV (119 aa)). S5 carries the phosphoserine modification. Composition is skewed to low complexity over residues 18 to 31 (NSGS…SGSS), 78 to 90 (NNQS…QKSK), and 104 to 113 (SKLFSSSFNG). The interaction with MEOX2 stretch occupies residues 101-185 (GGSSKLFSSS…FNKELFLQAN (85 aa)). A phosphoserine mark is found at S110 and S128. The segment at 225–267 (CPICLYPPTAAKITRCGHIFCWACILHYLSLSEKTWSKCPICY) adopts an RING-type zinc-finger fold. Polar residues predominate over residues 653–662 (DSALGPTSTE). Disordered stretches follow at residues 653-672 (DSAL…ISPL), 724-761 (DVWP…VPSF), and 776-811 (LDTP…VHTK). The segment covering 724–736 (DVWPKTAPKKDEN) has biased composition (basic and acidic residues). A compositionally biased stretch (polar residues) spans 802-811 (LFSTSVVHTK).

The protein belongs to the RNF10 family. In terms of assembly, interacts with MEOX2.

The protein localises to the cytoplasm. It localises to the nucleus. The enzyme catalyses S-ubiquitinyl-[E2 ubiquitin-conjugating enzyme]-L-cysteine + [acceptor protein]-L-lysine = [E2 ubiquitin-conjugating enzyme]-L-cysteine + N(6)-ubiquitinyl-[acceptor protein]-L-lysine.. It participates in protein modification; protein ubiquitination. Functionally, E3 ubiquitin-protein ligase that catalyzes monoubiquitination of 40S ribosomal proteins RPS2/us5 and RPS3/us3 in response to ribosome stalling. Part of a ribosome quality control that takes place when ribosomes have stalled during translation initiation (iRQC): RNF10 acts by mediating monoubiquitination of RPS2/us5 and RPS3/us3, promoting their degradation by the proteasome. Also promotes ubiquitination of 40S ribosomal proteins in response to ribosome stalling during translation elongation. The action of RNF10 in iRQC is counteracted by USP10. May also act as a transcriptional factor involved in the regulation of MAG (Myelin-associated glycoprotein) expression. Acts as a regulator of Schwann cell differentiation and myelination. The chain is E3 ubiquitin-protein ligase RNF10 from Homo sapiens (Human).